We begin with the raw amino-acid sequence, 3011 residues long: Genome polyprotein (3011 aa).

Ser-2 carries the N-acetylserine; by host modification. Positions 2-23 are interaction with STAT1; the sequence is STNPKPQRKTKRNTNRRPQDVK. An interaction with EIF2AK2/PKR region spans residues 2 to 58; sequence STNPKPQRKTKRNTNRRPQDVKFPGGGQIVGGVYLLPRRGPRLGVRATRKTSERSQP. The interaction with DDX3X stretch occupies residues 2 to 59; that stretch reads STNPKPQRKTKRNTNRRPQDVKFPGGGQIVGGVYLLPRRGPRLGVRATRKTSERSQPR. Positions 2 to 75 are disordered; the sequence is STNPKPQRKT…PKARRPEGRT (74 aa). Topologically, residues 2 to 168 are cytoplasmic; sequence STNPKPQRKT…EDGVNYATGN (167 aa). Short sequence motifs (nuclear localization signal) lie at residues 5 to 13 and 38 to 43; these read PKPQRKTKR and PRRGPR. Residues 7–16 are compositionally biased toward basic residues; that stretch reads PQRKTKRNTN. Residues 32–47 are compositionally biased toward low complexity; sequence GGVYLLPRRGPRLGVR. Residue Ser-53 is modified to Phosphoserine; by host. Short sequence motifs (nuclear localization signal) lie at residues 58 to 64 and 66 to 71; these read PRGRRQP and PKARRP. The segment covering 58 to 68 has biased composition (basic residues); it reads PRGRRQPIPKA. Ser-99 is subject to Phosphoserine; by host. The interval 112-152 is important for endoplasmic reticulum and mitochondrial localization; that stretch reads PRRRSRNLGKVIDTLTCGFADLMGYIPLVGAPLGGAARALA. At Ser-116 the chain carries Phosphoserine; by host PKA. An interaction with APOA2 region spans residues 122–173; it reads VIDTLTCGFADLMGYIPLVGAPLGGAARALAHGVRVLEDGVNYATGNLPGCS. Positions 164–167 are important for lipid droplets localization; sequence YATG. Residues 169–189 form a helical membrane-spanning segment; that stretch reads LPGCSFSIFLLALLSCLTVPA. A propeptide spans 178–191 (ER anchor for the core protein, removed in mature form by host signal peptidase); sequence LLALLSCLTVPASA. The Lumenal segment spans residues 190-358; that stretch reads SAYQVRNSSG…AGAHWGVLAG (169 aa). Residues Asn-196, Asn-209, and Asn-234 are each glycosylated (N-linked (GlcNAc...) asparagine; by host). The segment at 265–296 is important for fusion; sequence LVGSATLCSALYVGDLCGSVFLVGQLFTFSPR. Asn-305 is a glycosylation site (N-linked (GlcNAc...) asparagine; by host). The chain crosses the membrane as a helical span at residues 359 to 379; the sequence is IKYFSMVGNWAKVLVVLLLFA. At 380-725 the chain is on the lumenal side; sequence GVDAETHVTG…WEYVVLLFLL (346 aa). An HVR1 region spans residues 385–411; the sequence is THVTGGNAGRTTAGLVGLLTPGAKQNI. Residues Asn-417, Asn-423, Asn-430, and Asn-448 are each glycosylated (N-linked (GlcNAc...) (high mannose) asparagine; by host). 4 disulfides stabilise this stretch: Cys-429–Cys-552, Cys-452–Cys-459, Cys-486–Cys-494, and Cys-503–Cys-508. The tract at residues 474 to 479 is HVR2; the sequence is YANGSG. Asn-476 carries an N-linked (GlcNAc...) (high mannose) asparagine; by host glycan. The segment at 480 to 493 is CD81-binding 1; sequence LDERPYCWHYPPRP. Residues Asn-532 and Asn-540 are each glycosylated (N-linked (GlcNAc...) (high mannose) asparagine; by host). The interval 544–551 is CD81-binding 2; sequence PPLGNWFG. An N-linked (GlcNAc...) (high mannose) asparagine; by host glycan is attached at Asn-556. Cys-564 and Cys-569 are oxidised to a cystine. The N-linked (GlcNAc...) (high mannose) asparagine; by host glycan is linked to Asn-576. Cystine bridges form between Cys-581–Cys-585, Cys-597–Cys-620, and Cys-607–Cys-644. Residues Asn-623 and Asn-645 are each glycosylated (N-linked (GlcNAc...) (high mannose) asparagine; by host). Residues Cys-652 and Cys-677 are joined by a disulfide bond. The EIF2AK2/eIF2-alpha phosphorylation homology domain (PePHD) stretch occupies residues 660–671; the sequence is SELSPLLLSTTQ. A helical transmembrane segment spans residues 726–746; sequence LADARVCSCLWMMLLISQAEA. Topologically, residues 747–757 are lumenal; it reads ALENLVILNAA. The chain crosses the membrane as a helical span at residues 758-778; that stretch reads SLAGTHGLVSFLVFFCFAWYL. Topologically, residues 779–781 are cytoplasmic; it reads KGR. Residues 782-803 traverse the membrane as a helical segment; sequence WVPGAVYALYGMWPLLLLLLAL. At 804 to 813 the chain is on the lumenal side; sequence PQRAYALDTE. Residues 814-834 form a helical membrane-spanning segment; it reads VAASCGGVVLVGLMALTLSPY. Residues 835 to 838 lie on the Cytoplasmic side of the membrane; it reads YKRY. Residues 839-859 form a helical membrane-spanning segment; sequence ISWCMWWLQYFLTRVEAQLHV. Residues 860 to 881 lie on the Lumenal side of the membrane; it reads WVPPLNVRGGRDAVILLTCVVH. A helical transmembrane segment spans residues 882 to 902; the sequence is PALVFDITKLLLAIFGPLWIL. A Peptidase C18 domain is found at 899 to 1026; it reads LWILQASLLK…GMVSKGWRLL (128 aa). The Cytoplasmic portion of the chain corresponds to 903–1657; sequence QASLLKVPYF…CMSADLEVVT (755 aa). The tract at residues 904–1206 is protease NS2-3; the sequence is ASLLKVPYFV…PVENLETTMR (303 aa). A lipid anchor (S-palmitoyl cysteine; by host) is attached at Cys-922. Positions 929–949 are interaction with host SCPS1; that stretch reads AGGHYVQMAIIKLGALTGTCV. Residues His-952, Glu-972, and Cys-993 each act as for protease NS2 activity; shared with dimeric partner in the active site. Positions 1027-1208 constitute a Peptidase S29 domain; sequence APITAYAQQT…ENLETTMRSP (182 aa). Active-site charge relay system; for serine protease NS3 activity residues include His-1083 and Asp-1107. 2 residues coordinate Zn(2+): Cys-1123 and Cys-1125. The active-site Charge relay system; for serine protease NS3 activity is the Ser-1165. The Zn(2+) site is built by Cys-1171 and His-1175. Residues 1217–1369 enclose the Helicase ATP-binding domain; sequence PAVPQSFQVA…PNIEEVALST (153 aa). 1230 to 1237 provides a ligand contact to ATP; sequence APTGSGKS. Residues Ser-1237 and Glu-1317 each coordinate Mg(2+). The DECH box signature appears at 1316–1319; it reads DECH. The tract at residues 1486 to 1497 is RNA-binding; the sequence is QRRGRTGRGKPG. The chain crosses the membrane as a helical span at residues 1658–1678; it reads STWVLVGGVLAALAAYCLSTG. The NS3-binding stretch occupies residues 1679 to 1690; sequence CVVIVGRIVLSG. At 1679 to 1805 the chain is on the cytoplasmic side; it reads CVVIVGRIVL…AVTSPLTTGQ (127 aa). The helical transmembrane segment at 1806–1824 threads the bilayer; the sequence is TLLFNILGGWVAAQLAAPG. The Lumenal segment spans residues 1825-1828; it reads AATA. Residues 1829–1849 form a helical membrane-spanning segment; it reads FVGAGLAGAALDSVGLGKVLV. The tract at residues 1833 to 1861 is glycine zipper; it reads GLAGAALDSVGLGKVLVDILAGYGAGVAG. Asp-1850 is a topological domain (cytoplasmic). The helical transmembrane segment at 1851 to 1871 threads the bilayer; it reads ILAGYGAGVAGALVAFKIMSG. At 1872 to 1881 the chain is on the lumenal side; the sequence is EVPSTEDLVN. The helical transmembrane segment at 1882 to 1902 threads the bilayer; it reads LLPAILSPGALAVGVVFASIL. At 1903–1972 the chain is on the cytoplasmic side; the sequence is RRRVGPGEGA…WISSECTTPC (70 aa). A lipid anchor (S-palmitoyl cysteine; by host) is attached at Cys-1968. Cys-1972 carries S-palmitoyl cysteine; by host; partial lipidation. Residues 1973–2003 lie within the membrane without spanning it; that stretch reads SGSWLRDIWDWICEVLSDFKTWLKAKLMPQL. Residues 1978 to 1998 are membrane-binding; it reads RDIWDWICEVLSDFKTWLKAK. Over 2004 to 2990 the chain is Cytoplasmic; the sequence is PGIPFVSCQR…YHSVSHARPR (987 aa). The D1; RNA-binding stretch occupies residues 2005–2221; the sequence is GIPFVSCQRG…KATCTANHDS (217 aa). Zn(2+) contacts are provided by Cys-2011, Cys-2029, Cys-2031, and Cys-2052. The FKBP8-binding stretch occupies residues 2120-2208; that stretch reads EFFTELDGVR…ASSSASQLSA (89 aa). The transcriptional activation stretch occupies residues 2120 to 2332; that stretch reads EFFTELDGVR…PVPPPRKKRT (213 aa). The segment at 2135-2139 is interaction with non-structural protein 4A; sequence PPCKP. The interaction with host SKP2 stretch occupies residues 2189–2441; that stretch reads RLARGSPPSM…TPCAAEEQKL (253 aa). Phosphoserine; by host; in p56 is present on Ser-2194. Ser-2197 carries the phosphoserine; by host; in p58 modification. Ser-2201 bears the Phosphoserine; by host; in p56 and p58, regulates intracellular NS5A distribution mark. A phosphoserine; by host; in p58 mark is found at Ser-2204, Ser-2207, and Ser-2210. The ISDR stretch occupies residues 2210-2249; it reads SLKATCTANHDSPDAELIEANLLWRQEMGGNITRVESENK. The interval 2210–2275 is interaction with EIF2AK2/PKR; it reads SLKATCTANH…REVSVPAEIL (66 aa). Positions 2223–2315 are D2; it reads DAELIEANLL…YEPPVVHGCP (93 aa). The segment at 2224-2315 is disordered; that stretch reads AELIEANLLW…YEPPVVHGCP (92 aa). Residues 2249–2306 are NS4B-binding; sequence KVVILDSFDPLVAEEDEREVSVPAEILRKSRRFAPALPVWARPDYNPLLVETWKKPDY. The segment at 2281-2297 is interaction with human PPIA/CYPA; that stretch reads FAPALPVWARPDYNPLL. Residues 2315–2326 show a composition bias toward pro residues; sequence PLPPPRSPPVPP. Ser-2321 is subject to Phosphoserine; by host. The short motif at 2322–2325 is the SH3-binding element; that stretch reads PPVP. A Nuclear localization signal motif is present at residues 2326-2334; it reads PPRKKRTVV. The segment at 2329–2420 is D3; it reads KKRTVVLTES…GADTEDVVCC (92 aa). The tract at residues 2332-2441 is interaction with host IFI27; sequence TVVLTESTLP…TPCAAEEQKL (110 aa). Residues 2346-2409 form a disordered region; that stretch reads ELATKSFGSS…LSDGSWSTVS (64 aa). The span at 2349 to 2369 shows a compositional bias: low complexity; the sequence is TKSFGSSSTSGITGDNTTTSS. Lys-2350 participates in a covalent cross-link: Glycyl lysine isopeptide (Lys-Gly) (interchain with G-Cter in ubiquitin). Residues 2354–2377 are V3; the sequence is SSSTSGITGDNTTTSSEPAPSGCP. Residues 2367-2417 form an interaction with host VAPB region; sequence TSSEPAPSGCPPDSDVESYSSMPPLEGEPGDPDLSDGSWSTVSSGADTEDV. 2 positions are modified to phosphoserine; by host: Ser-2449 and Ser-2462. Residues 2634–2752 form the RdRp catalytic domain; that stretch reads PMGLSYDTRC…ICESAGVQED (119 aa). Mg(2+) contacts are provided by Asp-2640, Asp-2738, and Asp-2739. Residues 2991–3011 traverse the membrane as a helical segment; the sequence is WFWFCLLLLAAGVGIYLLPNR.

This sequence belongs to the hepacivirus polyprotein family. In terms of assembly, homooligomer. Interacts with E1 (via C-terminus). Interacts with the non-structural protein 5A. Interacts (via N-terminus) with host STAT1 (via SH2 domain); this interaction results in decreased STAT1 phosphorylation and ubiquitin-mediated proteasome-dependent STAT1 degradation, leading to decreased IFN-stimulated gene transcription. Interacts with host STAT3; this interaction constitutively activates STAT3. Associates with host LTBR receptor. Interacts with host TNFRSF1A receptor and possibly induces apoptosis. Interacts with host HNRPK. Interacts with host YWHAE. Interacts with host UBE3A/E6AP. Interacts with host DDX3X. Interacts with host APOA2. Interacts with host RXRA protein. Interacts with host SP110 isoform 3/Sp110b; this interaction sequesters the transcriptional corepressor SP110 away from the nucleus. Interacts with host CREB3 nuclear transcription protein; this interaction triggers cell transformation. Interacts with host ACY3. Interacts with host C1QR1. Interacts with host RBM24; this interaction, which enhances the interaction of the mature core protein with 5'-UTR, may inhibit viral translation and favor replication. Interacts (via N-terminus) with host EIF2AK2/PKR (via N-terminus); this interaction induces the autophosphorylation of EIF2AK2. Part of the viral assembly initiation complex composed of NS2, E1, E2, NS3, NS4A, NS5A and the mature core protein. Forms a heterodimer with envelope glycoprotein E2. Interacts with mature core protein. Interacts with protease NS2. The heterodimer E1/E2 interacts with host CLDN1; this interaction plays a role in viral entry into host cell. Interacts with host SPSB2 (via C-terminus). Part of the viral assembly initiation complex composed of NS2, E1, E2, NS3, NS4A, NS5A and the mature core protein. Interacts with host NEURL3; this interaction prevents E1 binding to glycoprotein E2. As to quaternary structure, forms a heterodimer with envelope glycoprotein E1. Interacts with host CD81 and SCARB1 receptors; these interactions play a role in viral entry into host cell. Interacts with host EIF2AK2/PKR; this interaction inhibits EIF2AK2 and probably allows the virus to evade the innate immune response. Interacts with host CD209/DC-SIGN and CLEC4M/DC-SIGNR. Interact with host SPCS1; this interaction is essential for viral particle assembly. Interacts with protease NS2. The heterodimer E1/E2 interacts with host CLDN1; this interaction plays a role in viral entry into host cell. Part of the viral assembly initiation complex composed of NS2, E1, E2, NS3, NS4A, NS5A and the mature core protein. Interacts with host SLC3A2/4F2hc; the interaction may facilitate viral entry into host cell. Interacts with human PLSCR1. In terms of assembly, homohexamer. Homoheptamer. Interacts with protease NS2. Homodimer. Interacts with host SPCS1; this interaction is essential for viral particle assembly. Interacts with envelope glycoprotein E1. Interacts with envelope glycoprotein E2. Interacts with viroporin p7. Interacts with serine protease/helicase NS3. Part of the replication complex composed of NS2, NS3, NS4A, NS4B, NS5A and the RNA-directed RNA polymerase embedded in an ER-derived membranous web. Part of the viral assembly initiation complex composed of NS2, E1, E2, NS3, NS4A, NS5A and the mature core protein. As to quaternary structure, interacts with protease NS2. Interacts with non-structural protein 4A; this interaction stabilizes the folding of NS3 serine protease. NS3-NS4A interaction is essential for NS3 activation and allows membrane anchorage of the latter. NS3/NS4A complex also prevents phosphorylation of host IRF3, thus preventing the establishment of dsRNA induced antiviral state. Interacts with host MAVS; this interaction leads to the cleavage and inhibition of host MAVS. Interacts with host TICAM1; this interaction leads to the cleavage and inhibition of host TICAM1. Interacts with host TANK-binding kinase/TBK1; this interaction results in the inhibition of the association between TBK1 and IRF3, which leads to the inhibition of IRF3 activation. Interacts with host RBM24. Part of the replication complex composed of NS2, NS3, NS4A, NS4B, NS5A and the RNA-directed RNA polymerase embedded in an ER-derived membranous web. Part of the viral assembly initiation complex composed of NS2, E1, E2, NS3, NS4A, NS5A and the mature core protein. In terms of assembly, interacts with NS3 serine protease; this interaction stabilizes the folding of NS3 serine protease. NS3-NS4A interaction is essential for NS3 activation and allows membrane anchorage of the latter. Interacts with non-structural protein 5A (via N-terminus). Part of the replication complex composed of NS2, NS3, NS4A, NS4B, NS5A and the RNA-directed RNA polymerase embedded in an ER-derived membranous web. Part of the viral assembly initiation complex composed of NS2, E1, E2, NS3, NS4A, NS5A and the mature core protein. Homomultimer. Interacts with non-structural protein NS5A. Interacts with host PLA2G4C; this interaction likely initiates the recruitment of replication complexes to lipid droplets. Interacts with host STING; this interaction disrupts the interaction between STING and TBK1 thereby suppressing the interferon signaling. Interacts with host METTL22; this interaction may promote the recruitment of NS4B in the proximity of lipid droplet. Part of the replication complex composed of NS2, NS3, NS4A, NS4B, NS5A and the RNA-directed RNA polymerase embedded in an ER-derived membranous web. As to quaternary structure, monomer. Homodimer; dimerization is required for RNA-binding. Interacts with the mature core protein. Interacts (via N-terminus) with non-structural protein 4A. Interacts with non-structural protein 4B. Interacts (via region D2) with RNA-directed RNA polymerase. Part of the viral assembly initiation complex composed of NS2, E1, E2, NS3, NS4A, NS5A and the mature core protein. Part of the replication complex composed of NS2, NS3, NS4A, NS4B, NS5A and the RNA-directed RNA polymerase embedded in an ER-derived membranous web. Interacts with host GRB2. Interacts with host BIN1. Interacts with host PIK3R1. Interacts with host SRCAP. Interacts with host FKBP8. Interacts (via C-terminus) with host VAPB (via MSP domain). Interacts with host EIF2AK2/PKR; this interaction leads to disruption of EIF2AK2 dimerization by NS5A and probably allows the virus to evade the innate immune response. Interacts (via N-terminus) with host PACSIN2 (via N-terminus); this interaction attenuates protein kinase C alpha-mediated phosphorylation of PACSIN2 by disrupting the interaction between PACSIN2 and PRKCA. Interacts (via N-terminus) with host SRC kinase (via SH2 domain). Interacts with most Src-family kinases. Interacts with host IFI27 and SKP2; promotes the ubiquitin-mediated proteasomal degradation of NS5A. Interacts with host GPS2. Interacts with host TNFRSF21; this interaction allows the modulation by the virus of JNK, p38 MAPK, STAT3, and Akt signaling pathways in a DR6-dependent manner. Interacts (via N-terminus) with host CIDEB (via N-terminus); this interaction seems to regulate the association of HCV particles with APOE. Interacts with host CHKA/Choline Kinase-alpha; CHKA bridges host PI4KA and NS5A and potentiates NS5A-stimulated PI4KA activity, which then facilitates the targeting of the ternary complex to the ER for viral replication. Interacts with host SPSB2 (via C-terminus); this interaction targets NS5A for ubiquitination and degradation. Interacts with host RAB18; this interaction may promote the association of NS5A and other replicase components with lipid droplets. Interacts (via region D2) with host PPIA/CYPA; the interaction stimulates RNA-binding ability of NS5A and is dependent on the peptidyl-prolyl cis-trans isomerase activity of PPIA/CYPA. Interacts with host TRIM14; this interaction induces the degradation of NS5A. In terms of assembly, homooligomer. Interacts with non-structural protein 5A. Interacts with host VAPB. Interacts with host PRK2/PKN2. Interacts with host HNRNPA1 and SEPT6; these interactions facilitate the viral replication. Part of the replication complex composed of NS2, NS3, NS4A, NS4B, NS5A and the RNA-directed RNA polymerase embedded in an ER-derived membranous web. Requires Zn(2+) as cofactor. It depends on Mg(2+) as a cofactor. Post-translationally, specific enzymatic cleavages in vivo yield mature proteins. The structural proteins, core, E1, E2 and p7 are produced by proteolytic processing by host signal peptidases. The core protein precursor is synthesized as a 23 kDa, which is retained in the ER membrane through the hydrophobic signal peptide. Cleavage by the signal peptidase releases the 21 kDa mature core protein. The cleavage of the core protein precursor occurs between aminoacids 176 and 188 but the exact cleavage site is not known. Some degraded forms of the core protein appear as well during the course of infection. The other proteins (p7, NS2, NS3, NS4A, NS4B, NS5A and NS5B) are cleaved by the viral proteases. Autoprocessing between NS2 and NS3 is mediated by the NS2 cysteine protease catalytic domain and regulated by the NS3 N-terminal domain. In terms of processing, phosphorylated by host PKC and PKA. Ubiquitinated; mediated by UBE3A and leading to core protein subsequent proteasomal degradation. Post-translationally, highly N-glycosylated. In terms of processing, palmitoylation is required for NS2/3 autoprocessing and E2 recruitment to membranes. Palmitoylated. This modification may play a role in its polymerization or in protein-protein interactions. Post-translationally, cleaved by host caspases which are probably activated by the viral infection. In terms of processing, ubiquitinated. Ubiquitination, most probably at Lys-2350, mediated by host IFI27 and SKP2 leads to proteasomal degradation, restricting viral infection. Ubiquitination by host TRIM22 leads to interruption of viral replication. Phosphorylated on serines in a basal form termed p56. p58 is a hyperphosphorylated form of p56. p56 and p58 coexist in the cell in roughly equivalent amounts. Hyperphosphorylation is dependent on the presence of NS4A. Host CSNK1A1/CKI-alpha, PI4KA or RPS6KB1 kinases may be responsible for NS5A phosphorylation. Phosphorylated NS5A is involved in viral replication. Post-translationally, tyrosine phosphorylation is essential for the interaction with host SRC. In terms of processing, the N-terminus is phosphorylated by host PRK2/PKN2.

The protein resides in the host endoplasmic reticulum membrane. It is found in the host mitochondrion membrane. Its subcellular location is the virion. It localises to the host cytoplasm. The protein localises to the host nucleus. The protein resides in the host lipid droplet. It is found in the virion membrane. Its subcellular location is the host mitochondrion. It localises to the host cell membrane. The protein localises to the host perinuclear region. It carries out the reaction Hydrolysis of four peptide bonds in the viral precursor polyprotein, commonly with Asp or Glu in the P6 position, Cys or Thr in P1 and Ser or Ala in P1'.. The catalysed reaction is a ribonucleoside 5'-triphosphate + H2O = a ribonucleoside 5'-diphosphate + phosphate + H(+). The enzyme catalyses ATP + H2O = ADP + phosphate + H(+). It catalyses the reaction RNA(n) + a ribonucleoside 5'-triphosphate = RNA(n+1) + diphosphate. Its activity is regulated as follows. Inhibited by the antiviral drug hexamethylene amiloride. Inhibited by amantadine. Inhibition by amantadine appears to be genotype-dependent. Also inhibited by long-alkyl-chain iminosugar derivatives. Activity is up-regulated by PRK2/PKN2-mediated phosphorylation. Packages viral RNA to form a viral nucleocapsid, and promotes virion budding. Participates in the viral particle production as a result of its interaction with the non-structural protein 5A. Binds RNA and may function as a RNA chaperone to induce the RNA structural rearrangements taking place during virus replication. Modulates viral translation initiation by interacting with viral IRES and 40S ribosomal subunit. Affects various cell signaling pathways, host immunity and lipid metabolism. Prevents the establishment of cellular antiviral state by blocking the interferon-alpha/beta (IFN-alpha/beta) and IFN-gamma signaling pathways and by blocking the formation of phosphorylated STAT1 and promoting ubiquitin-mediated proteasome-dependent degradation of STAT1. Activates STAT3 leading to cellular transformation. Regulates the activity of cellular genes, including c-myc and c-fos. May repress the promoter of p53, and sequester CREB3 and SP110 isoform 3/Sp110b in the cytoplasm. Represses cell cycle negative regulating factor CDKN1A, thereby interrupting an important check point of normal cell cycle regulation. Targets transcription factors involved in the regulation of inflammatory responses and in the immune response: suppresses NF-kappa-B activation, and activates AP-1. Binds to dendritic cells (DCs) via C1QR1, resulting in down-regulation of T-lymphocytes proliferation. Alters lipid metabolism by interacting with hepatocellular proteins involved in lipid accumulation and storage. Induces up-regulation of FAS promoter activity, and thereby contributes to the increased triglyceride accumulation in hepatocytes (steatosis). In terms of biological role, forms a heterodimer with envelope glycoprotein E2, which mediates virus attachment to the host cell, virion internalization through clathrin-dependent endocytosis and fusion with host membrane. Fusion with the host cell is most likely mediated by both E1 and E2, through conformational rearrangements of the heterodimer required for fusion rather than a classical class II fusion mechanism. E1/E2 heterodimer binds host apolipoproteins such as APOB and APOE thereby forming a lipo-viro-particle (LVP). APOE associated to the LVP allows the initial virus attachment to cell surface receptors such as the heparan sulfate proteoglycans (HSPGs), syndecan-1 (SDC1), syndecan-1 (SDC2), the low-density lipoprotein receptor (LDLR) and scavenger receptor class B type I (SCARB1). The cholesterol transfer activity of SCARB1 allows E2 exposure and binding of E2 to SCARB1 and the tetraspanin CD81. E1/E2 heterodimer binding on CD81 activates the epithelial growth factor receptor (EGFR) signaling pathway. Diffusion of the complex E1/E2-EGFR-SCARB1-CD81 to the cell lateral membrane allows further interaction with Claudin 1 (CLDN1) and occludin (OCLN) to finally trigger HCV entry. Functionally, forms a heterodimer with envelope glycoprotein E1, which mediates virus attachment to the host cell, virion internalization through clathrin-dependent endocytosis and fusion with host membrane. Fusion with the host cell is most likely mediated by both E1 and E2, through conformational rearrangements of the heterodimer required for fusion rather than a classical class II fusion mechanism. The interaction between E2 and host apolipoprotein E/APOE allows the proper assembly, maturation and infectivity of the viral particles. This interaction is probably promoted via the up-regulation of cellular autophagy by the virus. E1/E2 heterodimer binds host apolipoproteins such as APOB and APOE thereby forming a lipo-viro-particle (LVP). APOE associated to the LVP allows the initial virus attachment to cell surface receptors such as the heparan sulfate proteoglycans (HSPGs), syndecan-1 (SDC1), syndecan-1 (SDC2), the low-density lipoprotein receptor (LDLR) and scavenger receptor class B type I (SCARB1). The cholesterol transfer activity of SCARB1 allows E2 exposure and binding of E2 to SCARB1 and the tetraspanin CD81. E1/E2 heterodimer binding on CD81 activates the epithelial growth factor receptor (EGFR) signaling pathway. Diffusion of the complex E1/E2-EGFR-SCARB1-CD81 to the cell lateral membrane allows further interaction with Claudin 1 (CLDN1) and occludin (OCLN) to finally trigger HCV entry. Inhibits host EIF2AK2/PKR activation, preventing the establishment of an antiviral state. Viral ligand for CD209/DC-SIGN and CLEC4M/DC-SIGNR, which are respectively found on DCs, and on liver sinusoidal endothelial cells and macrophage-like cells of lymph node sinuses. These interactions allow the capture of circulating HCV particles by these cells and subsequent facilitated transmission to permissive cells such as hepatocytes and lymphocyte subpopulations. The interaction between E2 and host amino acid transporter complex formed by SLC3A2 and SLC7A5/LAT1 may facilitate viral entry into host cell. Its function is as follows. Ion channel protein that acts as a viroporin and plays an essential role in the assembly, envelopment and secretion of viral particles. Participates in virus envelopment by coordinating the encounter between NS5A and NS2-based assembly sites loaded with E1/E2 heterodimer, which subsequently leads to nucleocapsid envelopment. Creates a pore in acidic organelles and releases Ca(2+) and H(+) in the cytoplasm of infected cells, leading to a productive viral infection. High levels of cytoplasmic Ca(2+) may trigger membrane trafficking and transport of viral ER-associated proteins to viroplasms, sites of viral genome replication. The release of Ca(2+) may also activate the inflamasome leading to chronic inflammation. Targets also host mitochondria and induces mitochondrial depolarization. In addition of its role as a viroporin, acts as a lipid raft adhesion factor. Cysteine protease required for the proteolytic auto-cleavage between the non-structural proteins NS2 and NS3. The N-terminus of NS3 is required for the function of NS2 protease (active region NS2-3). Promotes the initiation of viral particle assembly by mediating the interaction between structural and non-structural proteins. In terms of biological role, displays three enzymatic activities: serine protease with a chymotrypsin-like fold, NTPase and RNA helicase. NS3 serine protease, in association with NS4A, is responsible for the cleavages of NS3-NS4A, NS4A-NS4B, NS4B-NS5A and NS5A-NS5B. The NS3/NS4A complex prevents phosphorylation of host IRF3, thus preventing the establishment of dsRNA induced antiviral state. The NS3/NS4A complex induces host amino acid transporter component SLC3A2, thus contributing to HCV propagation. NS3 RNA helicase binds to RNA and unwinds both dsDNA and dsRNA in the 3' to 5' direction, and likely resolves RNA complicated stable secondary structures in the template strand. Binds a single ATP and catalyzes the unzipping of a single base pair of dsRNA. Inhibits host antiviral proteins TBK1 and IRF3 thereby preventing the establishment of an antiviral state. Cleaves host MAVS/CARDIF thereby preventing the establishment of an antiviral state. Cleaves host TICAM1/TRIF, thereby disrupting TLR3 signaling and preventing the establishment of an antiviral state. Functionally, peptide cofactor which forms a non-covalent complex with the N-terminal of NS3 serine protease. The NS3/NS4A complex prevents phosphorylation of host IRF3, thus preventing the establishment of dsRNA induced antiviral state. The NS3/NS4A complex induces host amino acid transporter component SLC3A2, thus contributing to HCV propagation. Its function is as follows. Induces a specific membrane alteration that serves as a scaffold for the virus replication complex. This membrane alteration gives rise to the so-called ER-derived membranous web that contains the replication complex. NS4B self-interaction contributes to its function in membranous web formation. Promotes host TRIF protein degradation in a CASP8-dependent manner thereby inhibiting host TLR3-mediated interferon signaling. Disrupts the interaction between STING and TBK1 contributing to the inhibition of interferon signaling. Phosphorylated protein that is indispensable for viral replication and assembly. Both hypo- and hyperphosphorylated states are required for the viral life cycle. The hyperphosphorylated form of NS5A is an inhibitor of viral replication. Involved in RNA-binding and especially in binding to the viral genome. Zinc is essential for RNA-binding. Participates in the viral particle production as a result of its interaction with the viral mature core protein. Its interaction with host VAPB may target the viral replication complex to vesicles. Down-regulates viral IRES translation initiation. Mediates interferon resistance, presumably by interacting with and inhibiting host EIF2AK2/PKR. Prevents BIN1-induced apoptosis. Acts as a transcriptional activator of some host genes important for viral replication when localized in the nucleus. Via the interaction with host PACSIN2, modulates lipid droplet formation in order to promote virion assembly. Modulates TNFRSF21/DR6 signaling pathway for viral propagation. In terms of biological role, RNA-dependent RNA polymerase that performs primer-template recognition and RNA synthesis during viral replication. Initiates RNA transcription/replication at a flavin adenine dinucleotide (FAD), resulting in a 5'- FAD cap on viral RNAs. In this way, recognition of viral 5' RNA by host pattern recognition receptors can be bypassed, thereby evading activation of antiviral pathways. This is Genome polyprotein from Homo sapiens (Human).